Consider the following 293-residue polypeptide: Homoserine kinase (293 aa).

ATP is bound at residue 84–94; sequence PLSRGLGSSSA.

This sequence belongs to the GHMP kinase family. Homoserine kinase subfamily.

It localises to the cytoplasm. It carries out the reaction L-homoserine + ATP = O-phospho-L-homoserine + ADP + H(+). It functions in the pathway amino-acid biosynthesis; L-threonine biosynthesis; L-threonine from L-aspartate: step 4/5. Functionally, catalyzes the ATP-dependent phosphorylation of L-homoserine to L-homoserine phosphate. The polypeptide is Homoserine kinase (Aliarcobacter butzleri (strain RM4018) (Arcobacter butzleri)).